A 568-amino-acid polypeptide reads, in one-letter code: NADPH oxidase 3 (568 aa).

Over 1–13 the chain is Cytoplasmic; that stretch reads MMGCWILNEGLST. A helical membrane pass occupies residues 14–34; the sequence is ILVLSWLGINFYLFIDTFYWY. The Extracellular portion of the chain corresponds to 35–51; that stretch reads EEEESFHYTRVILGSTL. The chain crosses the membrane as a helical span at residues 52–72; sequence AWARASALCLNFNCMLILIPV. In terms of domain architecture, Ferric oxidoreductase spans 55 to 284; sequence RASALCLNFN…VVLYACERII (230 aa). The Cytoplasmic segment spans residues 73 to 103; sequence SRNLISFIRGTSICCRGPWRRQLDKNLRFHK. The helical transmembrane segment at 104 to 124 threads the bilayer; it reads LVAYGIAVNATIHIVAHFFNL. Residues 125-167 lie on the Extracellular side of the membrane; the sequence is ERYHWSQSEEAQGLLAALSKLGNTPNESYLNPVRTFPTNTTTE. An N-linked (GlcNAc...) asparagine glycan is attached at N163. Residues 168–188 traverse the membrane as a helical segment; it reads LLRTIAGVTGLVISLALVLIM. Residues 189-201 lie on the Cytoplasmic side of the membrane; sequence TSSTEFIRQASYE. The chain crosses the membrane as a helical span at residues 202 to 222; that stretch reads LFWYTHHVFIVFFLSLAIHGT. The Extracellular segment spans residues 223–395; that stretch reads GRIVRGQTQD…DGPFGTALTD (173 aa). A glycan (N-linked (GlcNAc...) asparagine) is linked at N238. An FAD-binding FR-type domain is found at 285–395; the sequence is RFWRFQQEVV…DGPFGTALTD (111 aa). The chain crosses the membrane as a helical span at residues 396–416; it reads VFHYPVCVCVAAGIGVTPFAA. The Cytoplasmic segment spans residues 417 to 568; the sequence is LLKSIWYKCS…VHFYYNKESF (152 aa).

As to quaternary structure, interacts with CYBA/p22phox. Heterodimerization with CYBA/p22phox is essential for its activity and cell membrane localization. Heme serves as cofactor. In terms of processing, N-glycosylated in a CYBA/p22phox-dependent manner.

Its subcellular location is the cell membrane. The enzyme catalyses NADPH + 2 O2 = 2 superoxide + NADP(+) + H(+). With respect to regulation, activated by the ototoxic drug cisplatin. Activated by NOXO1. Cooperatively activated by NCF1 and NCF2 or NOXA1 in a phorbol 12-myristate 13-acetate (PMA)-dependent manner. Inhibited by diphenyleneiodonium chloride. Its function is as follows. NADPH oxidase that catalyzes the generation of superoxide from molecular oxygen utilizing NADPH as an electron donor, upon formation of a complex with CYBA/p22phox. Plays a role in the biogenesis of otoconia/otolith, which are crystalline structures of the inner ear involved in the perception of gravity. This is NADPH oxidase 3 (NOX3) from Homo sapiens (Human).